A 273-amino-acid polypeptide reads, in one-letter code: Formamidopyrimidine-DNA glycosylase (273 aa).

Pro2 (schiff-base intermediate with DNA) is an active-site residue. Catalysis depends on Glu3, which acts as the Proton donor. Lys59 (proton donor; for beta-elimination activity) is an active-site residue. Residues His92 and Arg111 each coordinate DNA. Residues 239-273 form an FPG-type zinc finger; that stretch reads KVYGKTDEPCVVCGKPIEKIKLNGRGTHFCPNCQK. The active-site Proton donor; for delta-elimination activity is Arg263.

Belongs to the FPG family. In terms of assembly, monomer. It depends on Zn(2+) as a cofactor.

The catalysed reaction is Hydrolysis of DNA containing ring-opened 7-methylguanine residues, releasing 2,6-diamino-4-hydroxy-5-(N-methyl)formamidopyrimidine.. It catalyses the reaction 2'-deoxyribonucleotide-(2'-deoxyribose 5'-phosphate)-2'-deoxyribonucleotide-DNA = a 3'-end 2'-deoxyribonucleotide-(2,3-dehydro-2,3-deoxyribose 5'-phosphate)-DNA + a 5'-end 5'-phospho-2'-deoxyribonucleoside-DNA + H(+). Functionally, involved in base excision repair of DNA damaged by oxidation or by mutagenic agents. Acts as a DNA glycosylase that recognizes and removes damaged bases. Has a preference for oxidized purines, such as 7,8-dihydro-8-oxoguanine (8-oxoG). Has AP (apurinic/apyrimidinic) lyase activity and introduces nicks in the DNA strand. Cleaves the DNA backbone by beta-delta elimination to generate a single-strand break at the site of the removed base with both 3'- and 5'-phosphates. This Listeria monocytogenes serotype 4b (strain F2365) protein is Formamidopyrimidine-DNA glycosylase.